We begin with the raw amino-acid sequence, 499 residues long: Lysine--tRNA ligase (499 aa).

Glu-409 and Glu-416 together coordinate Mg(2+).

It belongs to the class-II aminoacyl-tRNA synthetase family. Homodimer. It depends on Mg(2+) as a cofactor.

The protein localises to the cytoplasm. The catalysed reaction is tRNA(Lys) + L-lysine + ATP = L-lysyl-tRNA(Lys) + AMP + diphosphate. The sequence is that of Lysine--tRNA ligase from Pseudomonas fluorescens (strain Pf0-1).